Here is a 618-residue protein sequence, read N- to C-terminus: 1-deoxy-D-xylulose-5-phosphate synthase (618 aa).

Residues H75 and G116 to S118 contribute to the thiamine diphosphate site. D147 is a binding site for Mg(2+). Thiamine diphosphate-binding positions include G148 to A149, N176, Y283, and E364. Position 176 (N176) interacts with Mg(2+).

Belongs to the transketolase family. DXPS subfamily. As to quaternary structure, homodimer. Requires Mg(2+) as cofactor. The cofactor is thiamine diphosphate.

It carries out the reaction D-glyceraldehyde 3-phosphate + pyruvate + H(+) = 1-deoxy-D-xylulose 5-phosphate + CO2. Its pathway is metabolic intermediate biosynthesis; 1-deoxy-D-xylulose 5-phosphate biosynthesis; 1-deoxy-D-xylulose 5-phosphate from D-glyceraldehyde 3-phosphate and pyruvate: step 1/1. Functionally, catalyzes the acyloin condensation reaction between C atoms 2 and 3 of pyruvate and glyceraldehyde 3-phosphate to yield 1-deoxy-D-xylulose-5-phosphate (DXP). This chain is 1-deoxy-D-xylulose-5-phosphate synthase, found in Thiobacillus denitrificans (strain ATCC 25259 / T1).